We begin with the raw amino-acid sequence, 456 residues long: Major facilitator superfamily domain-containing protein 10 (456 aa).

A run of 3 helical transmembrane segments spans residues 25-45, 87-107, and 114-136; these read VIIV…LLLP, VLFG…SAPL, and YLGR…AVWA. An N-linked (GlcNAc...) asparagine glycan is attached at Asn159. The next 8 membrane-spanning stretches (helical) occupy residues 179–199, 203–223, 278–298, 311–328, 345–365, 366–386, 403–423, and 424–444; these read AVIG…GAFL, MVPW…FCFL, LVYF…SFLA, KMFF…GTYA, LLLV…TLGL, GLML…TMVS, SLGA…YWLT, and GAQV…LLLW.

It belongs to the major facilitator superfamily. Esxpressed in luminal membrane of renal tubules. Expressed at the surface of eosinophils (at protein level).

Its subcellular location is the nucleus inner membrane. It localises to the cell membrane. Probable organic anion transporter which may serve as a transporter for some non-steroidal anti-inflammatory drugs (NSAIDs) as well as other organic anions across the luminal membranes of renal proximal tubules at the final excretion step into the urine. The sequence is that of Major facilitator superfamily domain-containing protein 10 (Mfsd10) from Mus musculus (Mouse).